A 217-amino-acid chain; its full sequence is tRNA (guanine-N(7)-)-methyltransferase (217 aa).

Residues E44, E69, D96, and D118 each contribute to the S-adenosyl-L-methionine site. D118 is an active-site residue. Substrate is bound by residues K122, D154, and 191–194 (TEYE).

It belongs to the class I-like SAM-binding methyltransferase superfamily. TrmB family.

It carries out the reaction guanosine(46) in tRNA + S-adenosyl-L-methionine = N(7)-methylguanosine(46) in tRNA + S-adenosyl-L-homocysteine. It functions in the pathway tRNA modification; N(7)-methylguanine-tRNA biosynthesis. In terms of biological role, catalyzes the formation of N(7)-methylguanine at position 46 (m7G46) in tRNA. This is tRNA (guanine-N(7)-)-methyltransferase from Bacillus thuringiensis (strain Al Hakam).